We begin with the raw amino-acid sequence, 380 residues long: uncharacterized protein (380 aa).

The N-terminal stretch at 1 to 18 (MALRHLALLAGLLVGVAS) is a signal peptide. N-linked (GlcNAc...) asparagine glycosylation is found at N104, N111, and N128. A helical transmembrane segment spans residues 148 to 168 (LFLGTFFISSGLILSVAGFFY). Disordered stretches follow at residues 229-256 (PQTG…QGQG) and 336-380 (RFSG…ISNV). Residues 240 to 249 (PPLPGSPGDP) show a composition bias toward pro residues. Basic and acidic residues predominate over residues 356–366 (VRRERPLDRAT).

It is found in the membrane. This is an uncharacterized protein from Homo sapiens (Human).